The following is a 627-amino-acid chain: DNA-directed RNA polymerase subunit gamma (627 aa).

Positions 70, 72, 85, and 88 each coordinate Zn(2+). Positions 468, 470, and 472 each coordinate Mg(2+).

It belongs to the RNA polymerase beta' chain family. RpoC1 subfamily. As to quaternary structure, in cyanobacteria the RNAP catalytic core is composed of 2 alpha, 1 beta, 1 beta', 1 gamma and 1 omega subunit. When a sigma factor is associated with the core the holoenzyme is formed, which can initiate transcription. Requires Mg(2+) as cofactor. Zn(2+) is required as a cofactor.

It catalyses the reaction RNA(n) + a ribonucleoside 5'-triphosphate = RNA(n+1) + diphosphate. Functionally, DNA-dependent RNA polymerase catalyzes the transcription of DNA into RNA using the four ribonucleoside triphosphates as substrates. The sequence is that of DNA-directed RNA polymerase subunit gamma from Synechococcus sp. (strain JA-3-3Ab) (Cyanobacteria bacterium Yellowstone A-Prime).